We begin with the raw amino-acid sequence, 689 residues long: Protein asunder (689 aa).

The stretch at 521 to 550 (NGARLKLSKAKDQYRLLYRELEQLIQLNAT) forms a coiled coil. Disordered stretches follow at residues 578–619 (GASL…SKRR) and 662–689 (PDFG…SVRS). Over residues 599 to 614 (SSGSASGSSNSNSLLK) the composition is skewed to low complexity. The Nuclear localization signal (NLS) signature appears at 613–619 (LKASKRR).

This sequence belongs to the Integrator subunit 13 family. Belongs to the multiprotein complex Integrator, at least composed of IntS1, IntS2, IntS3, IntS4, omd/IntS5, IntS6, defl/IntS7, IntS8, IntS9, IntS10, IntS11, IntS12, asun/IntS13, IntS14 and IntS15. The core complex associates with protein phosphatase 2A subunits mts/PP2A and Pp2A-29B, to form the Integrator-PP2A (INTAC) complex. Phosphorylated.

Its subcellular location is the nucleus. It localises to the cytoplasm. The protein resides in the perinuclear region. Component of the integrator complex, a multiprotein complex that terminates RNA polymerase II (Pol II) transcription in the promoter-proximal region of genes. The integrator complex provides a quality checkpoint during transcription elongation by driving premature transcription termination of transcripts that are unfavorably configured for transcriptional elongation: the complex terminates transcription by (1) catalyzing dephosphorylation of the C-terminal domain (CTD) of Pol II subunit Polr2A/Rbp1 and Spt5, and (2) degrading the exiting nascent RNA transcript via endonuclease activity. The integrator complex is also involved in the 3'-end processing of the U7 snRNA, and also the spliceosomal snRNAs U1, U2, U4 and U5. The protein is Protein asunder (asun) of Drosophila yakuba (Fruit fly).